The sequence spans 256 residues: 6-phosphogluconolactonase (256 aa).

This sequence belongs to the glucosamine/galactosamine-6-phosphate isomerase family. 6-phosphogluconolactonase subfamily.

It catalyses the reaction 6-phospho-D-glucono-1,5-lactone + H2O = 6-phospho-D-gluconate + H(+). It functions in the pathway carbohydrate degradation; pentose phosphate pathway; D-ribulose 5-phosphate from D-glucose 6-phosphate (oxidative stage): step 2/3. Functionally, hydrolysis of 6-phosphogluconolactone to 6-phosphogluconate. The chain is 6-phosphogluconolactonase (pgl) from Chlamydia muridarum (strain MoPn / Nigg).